Consider the following 82-residue polypeptide: Penaeidin-3g (82 aa).

The N-terminal stretch at 1 to 19 (MRLVVCLVFLASFALVCQG) is a signal peptide. The residue at position 20 (Gln20) is a Pyrrolidone carboxylic acid. Intrachain disulfides connect Cys51–Cys66, Cys55–Cys73, and Cys67–Cys74. Ser81 is subject to Serine amide.

It belongs to the penaeidin family.

The protein localises to the cytoplasmic granule. In terms of biological role, antibacterial and antifungal activity. Presents chitin-binding activity. The sequence is that of Penaeidin-3g from Penaeus vannamei (Whiteleg shrimp).